A 148-amino-acid polypeptide reads, in one-letter code: uncharacterized protein (148 aa).

The interval 83–148 (QPAVIPPVKA…TKKSNKKTRS (66 aa)) is disordered. Basic residues-rich tracts occupy residues 92–103 (AKPKATKKKTPV) and 113–124 (KQTKPKQSKPKS).

This is an uncharacterized protein from Mycoplasma genitalium (strain ATCC 33530 / DSM 19775 / NCTC 10195 / G37) (Mycoplasmoides genitalium).